The sequence spans 374 residues: uncharacterized protein (374 aa).

Positions 1 to 26 are cleaved as a signal peptide; it reads MNNLIKAYAAGVMSAAFLFGSEGRVR.

This is an uncharacterized protein from Treponema pallidum (strain Nichols).